The primary structure comprises 514 residues: Maturase K (514 aa).

This sequence belongs to the intron maturase 2 family. MatK subfamily.

It is found in the plastid. The protein localises to the chloroplast. Functionally, usually encoded in the trnK tRNA gene intron. Probably assists in splicing its own and other chloroplast group II introns. This Erythronium grandiflorum (Yellow avalanche-lily) protein is Maturase K.